The sequence spans 172 residues: ATP synthase subunit b (172 aa).

A helical transmembrane segment spans residues 27–47 (LAIVIFGLYKFLPPFVGGILE).

This sequence belongs to the ATPase B chain family. As to quaternary structure, F-type ATPases have 2 components, F(1) - the catalytic core - and F(0) - the membrane proton channel. F(1) has five subunits: alpha(3), beta(3), gamma(1), delta(1), epsilon(1). F(0) has four main subunits: a(1), b(1), b'(1) and c(10-14). The alpha and beta chains form an alternating ring which encloses part of the gamma chain. F(1) is attached to F(0) by a central stalk formed by the gamma and epsilon chains, while a peripheral stalk is formed by the delta, b and b' chains.

Its subcellular location is the cellular thylakoid membrane. F(1)F(0) ATP synthase produces ATP from ADP in the presence of a proton or sodium gradient. F-type ATPases consist of two structural domains, F(1) containing the extramembraneous catalytic core and F(0) containing the membrane proton channel, linked together by a central stalk and a peripheral stalk. During catalysis, ATP synthesis in the catalytic domain of F(1) is coupled via a rotary mechanism of the central stalk subunits to proton translocation. Its function is as follows. Component of the F(0) channel, it forms part of the peripheral stalk, linking F(1) to F(0). This chain is ATP synthase subunit b, found in Prochlorococcus marinus (strain MIT 9303).